Here is a 248-residue protein sequence, read N- to C-terminus: Probable transcriptional regulatory protein AZC_0510 (248 aa).

It belongs to the TACO1 family.

The protein localises to the cytoplasm. The chain is Probable transcriptional regulatory protein AZC_0510 from Azorhizobium caulinodans (strain ATCC 43989 / DSM 5975 / JCM 20966 / LMG 6465 / NBRC 14845 / NCIMB 13405 / ORS 571).